The following is a 626-amino-acid chain: Fructose-1,6-bisphosphatase class 3 (626 aa).

It belongs to the FBPase class 3 family. The cofactor is Mn(2+).

The catalysed reaction is beta-D-fructose 1,6-bisphosphate + H2O = beta-D-fructose 6-phosphate + phosphate. It functions in the pathway carbohydrate biosynthesis; gluconeogenesis. The chain is Fructose-1,6-bisphosphatase class 3 from Enterococcus faecalis (strain ATCC 700802 / V583).